We begin with the raw amino-acid sequence, 864 residues long: Translation initiation factor IF-2 (864 aa).

Residues 140–171 (DSRSLNTKKENKLKISNKDEQNKKFNQHRESN) show a composition bias toward basic and acidic residues. The tract at residues 140 to 179 (DSRSLNTKKENKLKISNKDEQNKKFNQHRESNSFDLNHKK) is disordered. One can recognise a tr-type G domain in the interval 364-533 (IRAPVVTIMG…LLQAEMLELK (170 aa)). A G1 region spans residues 373-380 (GHVDHGKT). 373 to 380 (GHVDHGKT) is a binding site for GTP. The tract at residues 398 to 402 (GITQN) is G2. The interval 419 to 422 (DTPG) is G3. GTP is bound by residues 419–423 (DTPGH) and 473–476 (NKID). The interval 473–476 (NKID) is G4. Residues 509–511 (SAK) form a G5 region.

This sequence belongs to the TRAFAC class translation factor GTPase superfamily. Classic translation factor GTPase family. IF-2 subfamily.

It is found in the cytoplasm. Its function is as follows. One of the essential components for the initiation of protein synthesis. Protects formylmethionyl-tRNA from spontaneous hydrolysis and promotes its binding to the 30S ribosomal subunits. Also involved in the hydrolysis of GTP during the formation of the 70S ribosomal complex. The polypeptide is Translation initiation factor IF-2 (Buchnera aphidicola subsp. Acyrthosiphon pisum (strain 5A)).